The chain runs to 173 residues: Ribosome maturation factor RimM (173 aa).

Residues 96-169 (PDEFYDHQLE…LITIDPPDGL (74 aa)) form the PRC barrel domain.

It belongs to the RimM family. As to quaternary structure, binds ribosomal protein uS19.

It is found in the cytoplasm. In terms of biological role, an accessory protein needed during the final step in the assembly of 30S ribosomal subunit, possibly for assembly of the head region. Essential for efficient processing of 16S rRNA. May be needed both before and after RbfA during the maturation of 16S rRNA. It has affinity for free ribosomal 30S subunits but not for 70S ribosomes. In Mycolicibacterium gilvum (strain PYR-GCK) (Mycobacterium gilvum (strain PYR-GCK)), this protein is Ribosome maturation factor RimM.